A 341-amino-acid chain; its full sequence is Phosphatidylserine decarboxylase proenzyme (341 aa).

Active-site charge relay system; for autoendoproteolytic cleavage activity residues include aspartate 90, histidine 147, and serine 254. Serine 254 functions as the Schiff-base intermediate with substrate; via pyruvic acid; for decarboxylase activity in the catalytic mechanism. Serine 254 bears the Pyruvic acid (Ser); by autocatalysis mark. The tract at residues 287-341 (RQDEQTPVVFPEGTELEENDAAQPPVAATSEPVQADGQNPAAEVSGQTGHKPDAP) is disordered.

Belongs to the phosphatidylserine decarboxylase family. PSD-B subfamily. Prokaryotic type I sub-subfamily. As to quaternary structure, heterodimer of a large membrane-associated beta subunit and a small pyruvoyl-containing alpha subunit. Requires pyruvate as cofactor. In terms of processing, is synthesized initially as an inactive proenzyme. Formation of the active enzyme involves a self-maturation process in which the active site pyruvoyl group is generated from an internal serine residue via an autocatalytic post-translational modification. Two non-identical subunits are generated from the proenzyme in this reaction, and the pyruvate is formed at the N-terminus of the alpha chain, which is derived from the carboxyl end of the proenzyme. The autoendoproteolytic cleavage occurs by a canonical serine protease mechanism, in which the side chain hydroxyl group of the serine supplies its oxygen atom to form the C-terminus of the beta chain, while the remainder of the serine residue undergoes an oxidative deamination to produce ammonia and the pyruvoyl prosthetic group on the alpha chain. During this reaction, the Ser that is part of the protease active site of the proenzyme becomes the pyruvoyl prosthetic group, which constitutes an essential element of the active site of the mature decarboxylase.

The protein localises to the cell membrane. It carries out the reaction a 1,2-diacyl-sn-glycero-3-phospho-L-serine + H(+) = a 1,2-diacyl-sn-glycero-3-phosphoethanolamine + CO2. It functions in the pathway phospholipid metabolism; phosphatidylethanolamine biosynthesis; phosphatidylethanolamine from CDP-diacylglycerol: step 2/2. Functionally, catalyzes the formation of phosphatidylethanolamine (PtdEtn) from phosphatidylserine (PtdSer). The sequence is that of Phosphatidylserine decarboxylase proenzyme from Pectobacterium atrosepticum (strain SCRI 1043 / ATCC BAA-672) (Erwinia carotovora subsp. atroseptica).